The following is a 110-amino-acid chain: uncharacterized protein (110 aa).

A run of 2 helical transmembrane segments spans residues 21–41 (IQLA…PQIC) and 63–83 (PSMI…IIVV).

The protein resides in the membrane. This is an uncharacterized protein from Saccharomyces cerevisiae (strain ATCC 204508 / S288c) (Baker's yeast).